Consider the following 268-residue polypeptide: Phosphatidylglycerol--prolipoprotein diacylglyceryl transferase (268 aa).

A run of 7 helical transmembrane segments spans residues 27 to 47 (PALRWYGFTYLVGFVAAMWLL), 66 to 86 (LLFYGFLGVILGGRIGYVLFY), 104 to 124 (GGMSFHGGLMGVITAMIYIAW), 130 to 150 (FFAVADMVAPVVPIGLGAGRI), 181 to 201 (PSQLYQFALEGVALFLLLYWF), 208 to 228 (VGAVSGMFLLGYGIFRVIVET), and 242 to 262 (FMTMGQILSVPMVLFGLYLIL). Residue arginine 149 coordinates a 1,2-diacyl-sn-glycero-3-phospho-(1'-sn-glycerol).

It belongs to the Lgt family.

The protein resides in the cell inner membrane. The catalysed reaction is L-cysteinyl-[prolipoprotein] + a 1,2-diacyl-sn-glycero-3-phospho-(1'-sn-glycerol) = an S-1,2-diacyl-sn-glyceryl-L-cysteinyl-[prolipoprotein] + sn-glycerol 1-phosphate + H(+). The protein operates within protein modification; lipoprotein biosynthesis (diacylglyceryl transfer). In terms of biological role, catalyzes the transfer of the diacylglyceryl group from phosphatidylglycerol to the sulfhydryl group of the N-terminal cysteine of a prolipoprotein, the first step in the formation of mature lipoproteins. The polypeptide is Phosphatidylglycerol--prolipoprotein diacylglyceryl transferase (Shewanella sp. (strain MR-4)).